Consider the following 437-residue polypeptide: GTPase Era, mitochondrial (437 aa).

A mitochondrion-targeting transit peptide spans 1 to 20 (MAAPRRYFPGIVRALLGAWQ). One can recognise an Era-type G domain in the interval 112–330 (RVLRVVLLGA…QYLLTQAQPG (219 aa)). The G1 stretch occupies residues 120–127 (GAPNAGKS). 120–127 (GAPNAGKS) is a binding site for GTP. The interval 146-150 (HTTRC) is G2. The segment at 167 to 170 (DTPG) is G3. 167–171 (DTPGI) is a GTP binding site. At Ser173 the chain carries Phosphoserine. A GTP-binding site is contributed by 236–239 (NKVD). The interval 236-239 (NKVD) is G4. The interval 272–293 (SRPSTHCPGPETEDPNTHAVRS) is disordered. Positions 308–310 (LSA) are G5. In terms of domain architecture, KH type-2 spans 360–437 (LPEEVPYSVQ…LLRLSVKLLK (78 aa)).

The protein belongs to the TRAFAC class TrmE-Era-EngA-EngB-Septin-like GTPase superfamily. Era GTPase family.

The protein resides in the mitochondrion matrix. It localises to the mitochondrion inner membrane. Its function is as follows. Probable GTPase that plays a role in the mitochondrial ribosomal small subunit assembly. Specifically binds the 12S mitochondrial rRNA (12S mt-rRNA) to a 33 nucleotide section delineating the 3' terminal stem-loop region. May act as a chaperone that protects the 12S mt-rRNA on the 28S mitoribosomal subunit during ribosomal small subunit assembly. The chain is GTPase Era, mitochondrial (Eral1) from Rattus norvegicus (Rat).